We begin with the raw amino-acid sequence, 78 residues long: Mandibular organ-inhibiting hormone 1 (78 aa).

Cystine bridges form between Cys7-Cys44, Cys24-Cys40, and Cys27-Cys53.

The protein belongs to the arthropod CHH/MIH/GIH/VIH hormone family. Produced by the medulla terminalis X-organ in the eyestalks and transported to the sinus gland where it is stored and released.

It localises to the secreted. Represses the synthesis of methyl farnesoate, the precursor of insect juvenile hormone III in the mandibular organ. This is Mandibular organ-inhibiting hormone 1 from Cancer pagurus (Rock crab).